The following is an 853-amino-acid chain: DNA mismatch repair protein MutS (853 aa).

Residue 614–621 coordinates ATP; the sequence is GPNMGGKS.

This sequence belongs to the DNA mismatch repair MutS family.

Functionally, this protein is involved in the repair of mismatches in DNA. It is possible that it carries out the mismatch recognition step. This protein has a weak ATPase activity. This is DNA mismatch repair protein MutS from Escherichia coli O127:H6 (strain E2348/69 / EPEC).